A 271-amino-acid polypeptide reads, in one-letter code: Formamidopyrimidine-DNA glycosylase (271 aa).

Catalysis depends on proline 2, which acts as the Schiff-base intermediate with DNA. Glutamate 3 acts as the Proton donor in catalysis. The active-site Proton donor; for beta-elimination activity is lysine 58. DNA is bound by residues histidine 91, arginine 110, and arginine 152. The segment at 237–271 adopts an FPG-type zinc-finger fold; sequence RAYGRGGQPCTVCQTELKEIKLGQRTSVFCPSCQR. The active-site Proton donor; for delta-elimination activity is the arginine 261.

Belongs to the FPG family. Monomer. Requires Zn(2+) as cofactor.

The enzyme catalyses Hydrolysis of DNA containing ring-opened 7-methylguanine residues, releasing 2,6-diamino-4-hydroxy-5-(N-methyl)formamidopyrimidine.. It catalyses the reaction 2'-deoxyribonucleotide-(2'-deoxyribose 5'-phosphate)-2'-deoxyribonucleotide-DNA = a 3'-end 2'-deoxyribonucleotide-(2,3-dehydro-2,3-deoxyribose 5'-phosphate)-DNA + a 5'-end 5'-phospho-2'-deoxyribonucleoside-DNA + H(+). Functionally, involved in base excision repair of DNA damaged by oxidation or by mutagenic agents. Acts as a DNA glycosylase that recognizes and removes damaged bases. Has a preference for oxidized purines, such as 7,8-dihydro-8-oxoguanine (8-oxoG). Has AP (apurinic/apyrimidinic) lyase activity and introduces nicks in the DNA strand. Cleaves the DNA backbone by beta-delta elimination to generate a single-strand break at the site of the removed base with both 3'- and 5'-phosphates. This chain is Formamidopyrimidine-DNA glycosylase, found in Hahella chejuensis (strain KCTC 2396).